Here is a 227-residue protein sequence, read N- to C-terminus: Phosphoribosylformylglycinamidine synthase subunit PurQ (227 aa).

In terms of domain architecture, Glutamine amidotransferase type-1 spans 3-225; the sequence is FAVIVFPGSN…LKQWRETYVV (223 aa). The active-site Nucleophile is cysteine 86. Active-site residues include histidine 194 and glutamate 196.

Part of the FGAM synthase complex composed of 1 PurL, 1 PurQ and 2 PurS subunits.

Its subcellular location is the cytoplasm. The enzyme catalyses N(2)-formyl-N(1)-(5-phospho-beta-D-ribosyl)glycinamide + L-glutamine + ATP + H2O = 2-formamido-N(1)-(5-O-phospho-beta-D-ribosyl)acetamidine + L-glutamate + ADP + phosphate + H(+). It carries out the reaction L-glutamine + H2O = L-glutamate + NH4(+). The protein operates within purine metabolism; IMP biosynthesis via de novo pathway; 5-amino-1-(5-phospho-D-ribosyl)imidazole from N(2)-formyl-N(1)-(5-phospho-D-ribosyl)glycinamide: step 1/2. Its function is as follows. Part of the phosphoribosylformylglycinamidine synthase complex involved in the purines biosynthetic pathway. Catalyzes the ATP-dependent conversion of formylglycinamide ribonucleotide (FGAR) and glutamine to yield formylglycinamidine ribonucleotide (FGAM) and glutamate. The FGAM synthase complex is composed of three subunits. PurQ produces an ammonia molecule by converting glutamine to glutamate. PurL transfers the ammonia molecule to FGAR to form FGAM in an ATP-dependent manner. PurS interacts with PurQ and PurL and is thought to assist in the transfer of the ammonia molecule from PurQ to PurL. This chain is Phosphoribosylformylglycinamidine synthase subunit PurQ, found in Bacillus cereus (strain Q1).